Here is a 318-residue protein sequence, read N- to C-terminus: Protoheme IX farnesyltransferase (318 aa).

The next 9 membrane-spanning stretches (helical) occupy residues Ile-29–Val-49, Pro-51–Ile-71, Leu-102–Leu-122, Leu-123–Leu-143, Ile-151–Gly-171, Leu-179–Ile-199, Ala-219–Val-239, Pro-241–Ile-261, and Leu-280–Leu-300.

It belongs to the UbiA prenyltransferase family. Protoheme IX farnesyltransferase subfamily.

The protein localises to the cell inner membrane. The catalysed reaction is heme b + (2E,6E)-farnesyl diphosphate + H2O = Fe(II)-heme o + diphosphate. It functions in the pathway porphyrin-containing compound metabolism; heme O biosynthesis; heme O from protoheme: step 1/1. In terms of biological role, converts heme B (protoheme IX) to heme O by substitution of the vinyl group on carbon 2 of heme B porphyrin ring with a hydroxyethyl farnesyl side group. The chain is Protoheme IX farnesyltransferase from Nostoc sp. (strain PCC 7120 / SAG 25.82 / UTEX 2576).